Consider the following 86-residue polypeptide: Parvalbumin beta 3 (86 aa).

Ala-1 is modified (N-acetylalanine). Residues 35–70 (LSPEEVKKFFAIIDQDHSGFIEEEELKLFLQTFSAG) form the EF-hand domain. Residues Asp-48, Asp-50, Ser-52, Phe-54, Glu-56, and Glu-59 each contribute to the Ca(2+) site.

The protein belongs to the parvalbumin family.

In muscle, parvalbumin is thought to be involved in relaxation after contraction. It binds two calcium ions. This chain is Parvalbumin beta 3, found in Merluccius hubbsi (Argentine hake).